Consider the following 494-residue polypeptide: 3-octaprenyl-4-hydroxybenzoate carboxy-lyase (494 aa).

N172 provides a ligand contact to Mn(2+). Residues I175–R177, R189–L191, and R194–G195 each bind prenylated FMN. E238 is a Mn(2+) binding site. The active-site Proton donor is D294.

This sequence belongs to the UbiD family. In terms of assembly, homohexamer. Prenylated FMN serves as cofactor. Mn(2+) is required as a cofactor.

It localises to the cell membrane. It carries out the reaction a 4-hydroxy-3-(all-trans-polyprenyl)benzoate + H(+) = a 2-(all-trans-polyprenyl)phenol + CO2. Its pathway is cofactor biosynthesis; ubiquinone biosynthesis. Catalyzes the decarboxylation of 3-octaprenyl-4-hydroxy benzoate to 2-octaprenylphenol, an intermediate step in ubiquinone biosynthesis. The sequence is that of 3-octaprenyl-4-hydroxybenzoate carboxy-lyase from Janthinobacterium sp. (strain Marseille) (Minibacterium massiliensis).